We begin with the raw amino-acid sequence, 760 residues long: Serine/threonine-protein kinase PknG (760 aa).

The segment at 1–31 is disordered; sequence MTSPENPDLPDADDAYVDSGPGTQPASLEDL. The Protein kinase domain occupies 161-403; it reads YEIKGCIAHG…SAEEMSSQLL (243 aa). ATP contacts are provided by residues 167–175 and Lys-191; that span reads IAHGGLGWV. The active-site Proton acceptor is the Asp-286.

The protein belongs to the protein kinase superfamily. Ser/Thr protein kinase family. Interacts with GarA in vitro.

The enzyme catalyses L-seryl-[protein] + ATP = O-phospho-L-seryl-[protein] + ADP + H(+). It catalyses the reaction L-threonyl-[protein] + ATP = O-phospho-L-threonyl-[protein] + ADP + H(+). This chain is Serine/threonine-protein kinase PknG (pknG), found in Mycolicibacterium smegmatis (strain ATCC 700084 / mc(2)155) (Mycobacterium smegmatis).